We begin with the raw amino-acid sequence, 526 residues long: MLO-like protein 1 (526 aa).

The Extracellular segment spans residues 1-11 (MGHGGEGMSLE). A helical membrane pass occupies residues 12–32 (FTPTWVVAGVCTVIVAISLAV). Over 33-61 (ERLLHYFGTVLKKKKQKPLYEALQKVKEE) the chain is Cytoplasmic. The chain crosses the membrane as a helical span at residues 62–82 (LMLLGFISLLLTVFQGLISKF). Over 83–160 (CVKENVLMHM…LSLEALHHLH (78 aa)) the chain is Extracellular. The chain crosses the membrane as a helical span at residues 161–181 (IFIFVLAISHVTFCVLTVIFG). At 182–287 (STRIHQWKKW…MRALEDDFKQ (106 aa)) the chain is on the cytoplasmic side. Transmembrane regions (helical) follow at residues 288-308 (VVGI…LNVN) and 309-329 (GWHT…AVGT). The Cytoplasmic portion of the chain corresponds to 330 to 372 (KLEHVIAQLAHEVAEKHVAIEGDLVVKPSDEHFWFSKPQIVLY). A helical membrane pass occupies residues 373–393 (LIHFILFQNAFEIAFFFWIWV). Residues 394-412 (TYGFDSCIMGQVRYIVPRL) are Extracellular-facing. A helical membrane pass occupies residues 413–433 (VIGVFIQVLCSYSTLPLYAIV). Topologically, residues 434 to 526 (SQMGSSFKKA…NNEITPDHNN (93 aa)) are cytoplasmic. The tract at residues 447-468 (ENVQVGLVGWAQKVKQKRDLKA) is calmodulin-binding. The segment at 471–526 (SNGDEGSSQAGPGPDSGSGSAPAAGPGAGFAGIQLSRVTRNNAGDTNNEITPDHNN) is disordered. Positions 476–495 (GSSQAGPGPDSGSGSAPAAG) are enriched in low complexity. Residues 506–520 (SRVTRNNAGDTNNEI) show a composition bias toward polar residues.

Belongs to the MLO family.

It localises to the cell membrane. In terms of biological role, may be involved in modulation of pathogen defense and leaf cell death. Activity seems to be regulated by Ca(2+)-dependent calmodulin binding and seems not to require heterotrimeric G proteins. The chain is MLO-like protein 1 (MLO1) from Arabidopsis thaliana (Mouse-ear cress).